Consider the following 582-residue polypeptide: ATP-dependent lipid A-core flippase (582 aa).

A run of 5 helical transmembrane segments spans residues Leu15 to Ile35, Tyr68 to Leu88, Gly140 to Leu160, Tyr161 to Ile181, and Val254 to Ile274. Residues Val27–Lys310 form the ABC transmembrane type-1 domain. The 237-residue stretch at Leu342–Ile578 folds into the ABC transporter domain. Position 376 to 383 (Gly376 to Ser383) interacts with ATP.

The protein belongs to the ABC transporter superfamily. Lipid exporter (TC 3.A.1.106) family. As to quaternary structure, homodimer.

It is found in the cell inner membrane. It carries out the reaction ATP + H2O + lipid A-core oligosaccharideSide 1 = ADP + phosphate + lipid A-core oligosaccharideSide 2.. In terms of biological role, involved in lipopolysaccharide (LPS) biosynthesis. Translocates lipid A-core from the inner to the outer leaflet of the inner membrane. Transmembrane domains (TMD) form a pore in the inner membrane and the ATP-binding domain (NBD) is responsible for energy generation. This chain is ATP-dependent lipid A-core flippase, found in Pasteurella multocida (strain Pm70).